The chain runs to 119 residues: Beta-2-microglobulin (119 aa).

An N-terminal signal peptide occupies residues 1 to 20 (MAPFVAIALLVLLSLSGLEA). Residues 25–114 (PKIQVYSRHP…VTFSTPKTVK (90 aa)) enclose the Ig-like C1-type domain. Cysteines 45 and 100 form a disulfide.

The protein belongs to the beta-2-microglobulin family. As to quaternary structure, heterodimer of an alpha chain and a beta chain. Beta-2-microglobulin is the beta-chain of major histocompatibility complex class I molecules.

The protein resides in the secreted. Its function is as follows. Component of the class I major histocompatibility complex (MHC). Involved in the presentation of peptide antigens to the immune system. The chain is Beta-2-microglobulin (B2M) from Cheracebus torquatus (Collared titi monkey).